Here is a 542-residue protein sequence, read N- to C-terminus: Chaperonin GroEL 1 (542 aa).

ATP is bound by residues 29 to 32 (TIGP), 86 to 90 (DGTTT), Gly-414, 479 to 481 (DAL), and Asp-495.

The protein belongs to the chaperonin (HSP60) family. In terms of assembly, forms a cylinder of 14 subunits composed of two heptameric rings stacked back-to-back. Interacts with the co-chaperonin GroES.

The protein localises to the cytoplasm. The enzyme catalyses ATP + H2O + a folded polypeptide = ADP + phosphate + an unfolded polypeptide.. Its function is as follows. Together with its co-chaperonin GroES, plays an essential role in assisting protein folding. The GroEL-GroES system forms a nano-cage that allows encapsulation of the non-native substrate proteins and provides a physical environment optimized to promote and accelerate protein folding. This Synechococcus sp. (strain JA-3-3Ab) (Cyanobacteria bacterium Yellowstone A-Prime) protein is Chaperonin GroEL 1.